A 1404-amino-acid polypeptide reads, in one-letter code: DNA-directed RNA polymerase subunit beta' (1404 aa).

Cys-70, Cys-72, Cys-85, and Cys-88 together coordinate Zn(2+). Mg(2+) contacts are provided by Asp-460, Asp-462, and Asp-464. Cys-814, Cys-889, Cys-896, and Cys-899 together coordinate Zn(2+). The segment at 1377–1404 (DSEMETLSGKPAAAEPVAAVADAGADEE) is disordered. The span at 1387–1404 (PAAAEPVAAVADAGADEE) shows a compositional bias: low complexity.

The protein belongs to the RNA polymerase beta' chain family. As to quaternary structure, the RNAP catalytic core consists of 2 alpha, 1 beta, 1 beta' and 1 omega subunit. When a sigma factor is associated with the core the holoenzyme is formed, which can initiate transcription. Mg(2+) is required as a cofactor. The cofactor is Zn(2+).

The catalysed reaction is RNA(n) + a ribonucleoside 5'-triphosphate = RNA(n+1) + diphosphate. Functionally, DNA-dependent RNA polymerase catalyzes the transcription of DNA into RNA using the four ribonucleoside triphosphates as substrates. The polypeptide is DNA-directed RNA polymerase subunit beta' (Xanthomonas euvesicatoria pv. vesicatoria (strain 85-10) (Xanthomonas campestris pv. vesicatoria)).